The following is a 594-amino-acid chain: UvrABC system protein C (594 aa).

Residues 14 to 91 form the GIY-YIG domain; it reads DKPGCYLMKD…IKKHDPKYNV (78 aa). The 36-residue stretch at 196–231 folds into the UVR domain; that stretch reads SDIKEQLRERMEKAAEDLDFERAKELRDTIAQMEKV.

It belongs to the UvrC family. Interacts with UvrB in an incision complex.

The protein resides in the cytoplasm. Functionally, the UvrABC repair system catalyzes the recognition and processing of DNA lesions. UvrC both incises the 5' and 3' sides of the lesion. The N-terminal half is responsible for the 3' incision and the C-terminal half is responsible for the 5' incision. This is UvrABC system protein C from Shouchella clausii (strain KSM-K16) (Alkalihalobacillus clausii).